A 299-amino-acid polypeptide reads, in one-letter code: tRNA dimethylallyltransferase (299 aa).

Residue 10-17 (GPTAVGKT) participates in ATP binding. 12–17 (TAVGKT) provides a ligand contact to substrate. Positions 35-38 (DSQQ) are interaction with substrate tRNA.

It belongs to the IPP transferase family. Monomer. Mg(2+) serves as cofactor.

It carries out the reaction adenosine(37) in tRNA + dimethylallyl diphosphate = N(6)-dimethylallyladenosine(37) in tRNA + diphosphate. Its function is as follows. Catalyzes the transfer of a dimethylallyl group onto the adenine at position 37 in tRNAs that read codons beginning with uridine, leading to the formation of N6-(dimethylallyl)adenosine (i(6)A). This is tRNA dimethylallyltransferase from Streptococcus thermophilus (strain ATCC BAA-250 / LMG 18311).